The following is a 208-amino-acid chain: Redox-sensing transcriptional repressor Rex 1 (208 aa).

Residues 15 to 54 (SYYMCLERLLDEGVEVVSSEELARRLDLKASQIRKDLSYF) constitute a DNA-binding region (H-T-H motif). 89–94 (GAGNIG) serves as a coordination point for NAD(+).

Belongs to the transcriptional regulatory Rex family. Homodimer.

It localises to the cytoplasm. Modulates transcription in response to changes in cellular NADH/NAD(+) redox state. In Thermotoga maritima (strain ATCC 43589 / DSM 3109 / JCM 10099 / NBRC 100826 / MSB8), this protein is Redox-sensing transcriptional repressor Rex 1.